Here is a 180-residue protein sequence, read N- to C-terminus: Probable DNA-directed RNA polymerase subunit delta (180 aa).

Residues 14–81 (LSMIEVARAI…GHNVWALRSW (68 aa)) enclose the HTH HARE-type domain. A disordered region spans residues 89–180 (EEVNHPEDEE…HQDDLDDDDE (92 aa)). Over residues 115–163 (DSDDDDIIDYDSDDPEDEDLDVDEEDTNEDDYSDDDLDDADDNELDDGI) the composition is skewed to acidic residues.

Belongs to the RpoE family. RNAP is composed of a core of 2 alpha, a beta and a beta' subunits. The core is associated with a delta subunit and one of several sigma factors.

Its function is as follows. Participates in both the initiation and recycling phases of transcription. In the presence of the delta subunit, RNAP displays an increased specificity of transcription, a decreased affinity for nucleic acids, and an increased efficiency of RNA synthesis because of enhanced recycling. This Lactobacillus johnsonii (strain CNCM I-12250 / La1 / NCC 533) protein is Probable DNA-directed RNA polymerase subunit delta.